A 179-amino-acid polypeptide reads, in one-letter code: ATP synthase subunit b (179 aa).

Residues 13-33 traverse the membrane as a helical segment; it reads IHIDELVFGLIAFAVIFALVY.

This sequence belongs to the ATPase B chain family. F-type ATPases have 2 components, F(1) - the catalytic core - and F(0) - the membrane proton channel. F(1) has five subunits: alpha(3), beta(3), gamma(1), delta(1), epsilon(1). F(0) has three main subunits: a(1), b(2) and c(10-14). The alpha and beta chains form an alternating ring which encloses part of the gamma chain. F(1) is attached to F(0) by a central stalk formed by the gamma and epsilon chains, while a peripheral stalk is formed by the delta and b chains.

The protein localises to the cell membrane. Its function is as follows. F(1)F(0) ATP synthase produces ATP from ADP in the presence of a proton or sodium gradient. F-type ATPases consist of two structural domains, F(1) containing the extramembraneous catalytic core and F(0) containing the membrane proton channel, linked together by a central stalk and a peripheral stalk. During catalysis, ATP synthesis in the catalytic domain of F(1) is coupled via a rotary mechanism of the central stalk subunits to proton translocation. In terms of biological role, component of the F(0) channel, it forms part of the peripheral stalk, linking F(1) to F(0). The chain is ATP synthase subunit b from Thermobifida fusca (strain YX).